A 357-amino-acid polypeptide reads, in one-letter code: Glutamate 5-kinase (357 aa).

Residue Lys-7 participates in ATP binding. Residues Ser-43, Asp-130, and Asn-142 each contribute to the substrate site. ATP-binding positions include 162-163 (TD) and 205-211 (TGGMTTK). Positions 270-353 (EGELQLDAGA…PVVVHRDGLV (84 aa)) constitute a PUA domain.

Belongs to the glutamate 5-kinase family.

Its subcellular location is the cytoplasm. It catalyses the reaction L-glutamate + ATP = L-glutamyl 5-phosphate + ADP. Its pathway is amino-acid biosynthesis; L-proline biosynthesis; L-glutamate 5-semialdehyde from L-glutamate: step 1/2. In terms of biological role, catalyzes the transfer of a phosphate group to glutamate to form L-glutamate 5-phosphate. The protein is Glutamate 5-kinase of Synechococcus sp. (strain CC9605).